The chain runs to 2135 residues: Protein SUBSTANDARD STARCH GRAIN 4, chloroplastic (2135 aa).

2 stretches are compositionally biased toward low complexity: residues Met-1–Phe-10 and Gln-72–Gln-84. A chloroplast-targeting transit peptide spans Met-1–Val-42. 2 disordered regions span residues Met-1–Arg-44 and Ser-58–Pro-89. Residues Ala-43–Gly-104 are Stromal-facing. Residues Leu-105 to Trp-125 traverse the membrane as a helical segment. At Tyr-126–Gly-2135 the chain is on the chloroplast intermembrane side. Basic residues predominate over residues Arg-361–Ser-370. 3 disordered regions span residues Arg-361 to Gln-382, Ser-401 to Glu-492, and Phe-1843 to Pro-1869. Composition is skewed to polar residues over residues Ile-373–Gln-382, Asn-454–Val-490, and Ser-1846–Ser-1856. Residues Glu-1857–Ser-1866 show a composition bias toward basic and acidic residues.

The protein belongs to the TamB family. As to quaternary structure, part of the TIC complex, which can interact with components of the TOC complex to form a larger import complex. Highly expressed in third leaf and developing seeds. Expressed in anthers, pistils, flag leaves and young panicles.

The protein localises to the plastid. It localises to the chloroplast inner membrane. The protein resides in the chloroplast intermembrane space. Its subcellular location is the chloroplast. It is found in the amyloplast. Part of the inner chloroplast membrane translocon complex (TIC) which associates with the outer chloroplast membrane translocon complex (TOC) and forms a supercomplex involved in protein precursor import into the chloroplast stroma. Required for the regulation of starch granule size in amyloplasts. The sequence is that of Protein SUBSTANDARD STARCH GRAIN 4, chloroplastic from Oryza sativa subsp. japonica (Rice).